The sequence spans 398 residues: Acetate kinase (398 aa).

Position 7 (N7) interacts with Mg(2+). Position 14 (K14) interacts with ATP. Residue R91 participates in substrate binding. The active-site Proton donor/acceptor is D148. ATP-binding positions include 208–212 (HLGNG), 283–285 (DFR), and 331–335 (GIGEH). Residue E386 participates in Mg(2+) binding.

This sequence belongs to the acetokinase family. Homodimer. Requires Mg(2+) as cofactor. Mn(2+) serves as cofactor.

Its subcellular location is the cytoplasm. It catalyses the reaction acetate + ATP = acetyl phosphate + ADP. It participates in metabolic intermediate biosynthesis; acetyl-CoA biosynthesis; acetyl-CoA from acetate: step 1/2. Functionally, catalyzes the formation of acetyl phosphate from acetate and ATP. Can also catalyze the reverse reaction. The polypeptide is Acetate kinase (Clostridium botulinum (strain Eklund 17B / Type B)).